The following is a 535-amino-acid chain: Sodium/hydrogen exchanger 9B2 (535 aa).

Residues 1–14 (MRNQDKRAAHKDSE) show a composition bias toward basic and acidic residues. The segment at 1-70 (MRNQDKRAAH…TPAEPNHLQR (70 aa)) is disordered. Residues 1–85 (MRNQDKRAAH…ACPPRGLLAR (85 aa)) lie on the Cytoplasmic side of the membrane. Composition is skewed to polar residues over residues 16–34 (STEVNHTASSYQGRQQETG) and 46–58 (TEGSNLLNNNEKM). The helical transmembrane segment at 86–103 (VITNVTMVILLWAVVWSV) threads the bilayer. Residues 104-112 (TGSECLPGG) are Extracellular-facing. Residues 113 to 132 (NLFGIIMLFYCAIIGGKLFG) traverse the membrane as a helical segment. The Cytoplasmic portion of the chain corresponds to 133–143 (LIKLPTLPPLP). A helical transmembrane segment spans residues 144-160 (PLLGMLLAGFLIRNVPV). Over 161–170 (ISDNIQIKHK) the chain is Extracellular. The helical transmembrane segment at 171–188 (WSSALRSIALSVILVRAG) threads the bilayer. Over 189-199 (LGLDSNALKKL) the chain is Cytoplasmic. A helical membrane pass occupies residues 200–226 (KGVCVRLSLGPCLIEACTSAVLAYFLM). The Extracellular portion of the chain corresponds to 227–232 (GLPWQW). Residues 233-241 (GFMLGFVLG) form a helical membrane-spanning segment. Topologically, residues 242-269 (AVSPAVVVPSMLLLQEGGYGVEKGIPTL) are cytoplasmic. 4 residues coordinate Na(+): Val-243, Gly-274, Asp-277, and Asp-278. A helical transmembrane segment spans residues 270–289 (LMAAGSFDDILAITGFNTCL). Topologically, residues 290–299 (GMAFSTGSTV) are extracellular. A helical membrane pass occupies residues 300 to 323 (FNVLKGVLEVIIGVVTGLVLGFFI). Residues 324 to 338 (QYFPSSDQDNLVWKR) lie on the Cytoplasmic side of the membrane. The chain crosses the membrane as a helical span at residues 339 to 356 (AFLVLGLSVLAVFSSTYF). Residues 357 to 360 (GFPG) are Extracellular-facing. The chain crosses the membrane as a helical span at residues 361 to 372 (SGGLCTLVTAFL). Residues 373-389 (AGRGWASTKTDVEKVIA) lie on the Cytoplasmic side of the membrane. The chain crosses the membrane as a helical span at residues 390–410 (VAWDIFQPLLFGLIGAEVLIT). The Extracellular portion of the chain corresponds to 411–416 (ALRPET). A helical transmembrane segment spans residues 417–439 (IGLCVATLGIAVLIRILVTYLMV). Topologically, residues 440 to 460 (CFAGFNIKEKIFISFAWLPKA) are cytoplasmic. The helical transmembrane segment at 461 to 472 (TVQAAIGSVALD) threads the bilayer. The Extracellular segment spans residues 473 to 485 (TARSHGEKQLEGY). A helical transmembrane segment spans residues 486 to 508 (GMDVLTVAFLSIIITAPVGSLLI). At 509–535 (GLLGPRLLQKAEQNKDEEDQGETSIQV) the chain is on the cytoplasmic side.

Belongs to the monovalent cation:proton antiporter 1 (CPA1) transporter (TC 2.A.36) family. Homodimer; dimerization is essential for SLC9B2 activity. Lipids seem to play a role in the stabilization of the dimerization subdomain.

The protein localises to the cell membrane. It localises to the mitochondrion membrane. Its subcellular location is the endosome membrane. It is found in the recycling endosome membrane. The protein resides in the lysosome membrane. The protein localises to the cytoplasmic vesicle. It localises to the secretory vesicle. Its subcellular location is the synaptic vesicle membrane. It is found in the cell projection. The protein resides in the cilium. The protein localises to the flagellum membrane. It localises to the basolateral cell membrane. Its subcellular location is the apical cell membrane. It catalyses the reaction Li(+)(out) + H(+)(in) = Li(+)(in) + H(+)(out). The catalysed reaction is Li(+)(in) + Na(+)(out) = Li(+)(out) + Na(+)(in). The enzyme catalyses Na(+)(in) + H(+)(out) = Na(+)(out) + H(+)(in). Its activity is regulated as follows. Allosterically inhibited by the N-terminal domain. Inhibited by phloretin. Functionally, electroneutral Na(+) Li(+)/H(+) antiporter that extrudes Na(+) or Li(+) in exchange for external protons across the membrane. Uses the proton gradient/membrane potential to extrude sodium. Contributes to the regulation of intracellular pH and sodium homeostasis. Also able to mediate Na(+)/Li(+) antiporter activity in kidney. May play a physiological role in renal tubular function and blood pressure homeostasis. Plays an important role for insulin secretion and clathrin-mediated endocytosis in beta-cells. Involved in sperm motility and fertility. It is controversial whether SLC9B2 plays a role in osteoclast differentiation or not. The polypeptide is Sodium/hydrogen exchanger 9B2 (SLC9B2) (Bison bison bison (North American plains bison)).